Consider the following 348-residue polypeptide: Ion-translocating oxidoreductase complex subunit D (348 aa).

5 helical membrane-spanning segments follow: residues 15–35, 36–56, 67–87, 88–108, and 125–145; these read LTAKFMLWVMVAMLPALGMQA, YFFGYGVFIQVFIALLLAVAI, LTAFYVADLSGVLTALILAMS, IPPYAPYWIIVIGIIVALLLA, and VAYALLLVSFPVQMTGWLVPI. Threonine 186 is modified (FMN phosphoryl threonine). 5 consecutive transmembrane segments (helical) span residues 212–232, 241–261, 265–285, 298–318, and 320–340; these read LFANGWWQINLAFLAGGLLLI, IPAAMLGMFALLSGLTDLLLP, LNVVSQLFSGAMMFGAFFIAT, LIFGGLIGLFVYLIRYYGNYP, and AVAFSVLLANICVPLIDHYTQ.

Belongs to the NqrB/RnfD family. As to quaternary structure, the complex is composed of six subunits: RnfA, RnfB, RnfC, RnfD, RnfE and RnfG. FMN serves as cofactor.

The protein resides in the cell inner membrane. Functionally, part of a membrane-bound complex that couples electron transfer with translocation of ions across the membrane. The chain is Ion-translocating oxidoreductase complex subunit D from Actinobacillus pleuropneumoniae serotype 7 (strain AP76).